Consider the following 309-residue polypeptide: Dicarboxylate carrier UCP2 (309 aa).

Residues 1-16 (MVGFKATDVPPTATVK) are Mitochondrial intermembrane-facing. Solcar repeat units lie at residues 11–106 (PTAT…VKQF), 114–203 (AGIG…IKDT), and 212–297 (DDLP…LKRA). An important for interaction with long-chain fatty acids region spans residues 16-63 (KFLGAGTAACIADLITFPLDTAKVRLQIQGESQGLARTAASAQYRGVL). The helical transmembrane segment at 17-40 (FLGAGTAACIADLITFPLDTAKVR) threads the bilayer. Residues 41–77 (LQIQGESQGLARTAASAQYRGVLGTILTMVRTEGPRS) are Mitochondrial matrix-facing. Residues 78 to 103 (LYNGLVAGLQRQMSFASVRIGLYDSV) traverse the membrane as a helical segment. Residues 104–119 (KQFYTKGSEHAGIGSR) lie on the Mitochondrial intermembrane side of the membrane. The helical transmembrane segment at 120–145 (LLAGSTTGALAVAVAQPTDVVKVRFQ) threads the bilayer. Residues 146–173 (AQARAGGGRRYQSTVEAYKTIAREEGIR) are Mitochondrial matrix-facing. The chain crosses the membrane as a helical span at residues 174–199 (GLWKGTSPNVARNAIVNCTELVTYDL). At 200–217 (IKDTLLKANLMTDDLPCH) the chain is on the mitochondrial intermembrane side. A helical transmembrane segment spans residues 218-242 (FTSAFGAGFCTTVIASPVDVVKTRY). At 243-268 (MNSALGQYHSAGHCALTMLRKEGPRA) the chain is on the mitochondrial matrix side. The helical transmembrane segment at 269–294 (FYKGFMPSFLRLGSWNVVMFVTYEQL) threads the bilayer. Residues 278–285 (LRLGSWNV) are important for interaction with long-chain fatty acids. Residues 295 to 309 (KRALMAAYESREAPF) lie on the Mitochondrial intermembrane side of the membrane.

It belongs to the mitochondrial carrier (TC 2.A.29) family. As to quaternary structure, homotetramer. Adopts an asymmetrical dimer of dimers functional form. Interacts with MICU1 (when methylated); leading to decrease the calcium sensitivity of MICU1. As to expression, expressed in a variety of organs, with predominant expression in the heart, lung and spleen.

The protein resides in the mitochondrion inner membrane. The catalysed reaction is L-aspartate(out) + phosphate(in) + H(+)(in) = L-aspartate(in) + phosphate(out) + H(+)(out). The enzyme catalyses oxaloacetate(out) + phosphate(in) + H(+)(in) = oxaloacetate(in) + phosphate(out) + H(+)(out). It catalyses the reaction (S)-malate(out) + phosphate(in) + H(+)(in) = (S)-malate(in) + phosphate(out) + H(+)(out). It carries out the reaction malonate(out) + phosphate(in) + H(+)(in) = malonate(in) + phosphate(out) + H(+)(out). The catalysed reaction is sulfate(out) + phosphate(in) + H(+)(in) = sulfate(in) + phosphate(out) + H(+)(out). The enzyme catalyses (S)-malate(out) = (S)-malate(in). It catalyses the reaction L-aspartate(out) = L-aspartate(in). It carries out the reaction phosphate(in) = phosphate(out). The catalysed reaction is chloride(in) = chloride(out). The enzyme catalyses H(+)(in) = H(+)(out). It catalyses the reaction a long-chain fatty acid(out) = a long-chain fatty acid(in). Antiporter that exports dicarboxylate intermediates of the Krebs cycle in exchange for phosphate plus a proton across the inner membrane of mitochondria, a process driven by mitochondrial motive force with an overall impact on glycolysis, glutaminolysis and glutathione-dependent redox balance. Continuous export of oxaloacetate and related four-carbon dicarboxylates from mitochondrial matrix into the cytosol negatively regulates the oxidation of acetyl-CoA substrates via the Krebs cycle lowering the ATP/ADP ratio and reactive oxygen species (ROS) production. May mediate inducible proton entry into the mitochondrial matrix affecting ATP turnover as a protection mechanism against oxidative stress. The proton currents are most likely associated with fatty acid flipping across the inner membrane of mitochondria in a metabolic process regulated by free fatty acids and purine nucleotides. Regulates the use of glucose as a source of energy. Required for glucose-induced DRP1-dependent mitochondrial fission and neuron activation in the ventromedial nucleus of the hypothalamus (VMH). This mitochondrial adaptation mechanism modulates the VMH pool of glucose-excited neurons with an impact on systemic glucose homeostasis. Regulates ROS levels and metabolic reprogramming of macrophages during the resolution phase of inflammation. Attenuates ROS production in response to IL33 to preserve the integrity of the Krebs cycle required for persistent production of itaconate and subsequent GATA3-dependent differentiation of inflammation-resolving alternatively activated macrophages. Can unidirectionally transport anions including L-malate, L-aspartate, phosphate and chloride ions. Does not mediate adaptive thermogenesis. In Rattus norvegicus (Rat), this protein is Dicarboxylate carrier UCP2 (Ucp2).